The sequence spans 76 residues: Dermaseptin-SP2 (76 aa).

The signal sequence occupies residues 1-22 (MAFLKKSLFLVLFLGLVSLSIC). Residues 23–45 (EEEKRENEDEEEQEDEEQSEEKR) constitute a propeptide that is removed on maturation. The disordered stretch occupies residues 24–44 (EEKRENEDEEEQEDEEQSEEK). Residues 30-41 (EDEEEQEDEEQS) show a composition bias toward acidic residues. Glutamine 73 carries the glutamine amide modification. Positions 74 to 76 (GEQ) are excised as a propeptide.

As to expression, expressed by the skin glands.

Its subcellular location is the secreted. The protein resides in the target cell membrane. In terms of biological role, antimicrobial peptide with activity against Gram-positive and Gram-negative bacteria and fungi. Has been tested against E.coli (MIC=2.68-8 uM), S.aureus (ATCC 25923, MIC=2.68-8 uM), S.aureus (ATCC oxacillin resistant, MIC=2.68 uM), K.pneumoniae (MIC=10.71 uM) and C.albicans (MIC=10.71-32 uM). Probably acts by disturbing membrane functions with its alpha-helical amphipathic structure. May penetrate bacterial membranes, but stay at the mammalian membrane surface. Shows a very weak hemolytic activity. The chain is Dermaseptin-SP2 from Agalychnis spurrelli (Gliding leaf frog).